Consider the following 814-residue polypeptide: Transcription factor oryO (814 aa).

Disordered regions lie at residues M1–N59 and P699–P723. Composition is skewed to polar residues over residues A16–D27 and Q49–N59. Positions C58–C85 form a DNA-binding region, zn(2)-C6 fungal-type. Positions P713 to P723 are enriched in low complexity.

The protein localises to the nucleus. Its function is as follows. Transcription factor that regulates the expression of the gene cluster that mediates the biosynthesis of oryzines, natural products with an unusual maleidride backbone. In Aspergillus oryzae (strain ATCC 42149 / RIB 40) (Yellow koji mold), this protein is Transcription factor oryO.